The chain runs to 435 residues: Minor fimbrial subunit HifE (435 aa).

Residues 1–31 (MKTLTTYAKYFTPISKIAFLFCFLMGNIAEA) form the signal peptide.

It belongs to the fimbrial protein family.

It localises to the fimbrium. May be a minor structural protein required for pilus biogenesis. May be the adhesive component in the pili. In Haemophilus influenzae, this protein is Minor fimbrial subunit HifE (hifE).